The primary structure comprises 629 residues: uncharacterized protein (629 aa).

N-acetylmethionine is present on Met-1. The interval 308–395 is disordered; the sequence is VDPEPEPDPP…PGRRSRARNA (88 aa). A compositionally biased stretch (polar residues) spans 322–334; that stretch reads SANEPASQPNSRS. The VWFA domain occupies 451 to 587; sequence LVIFVVDASG…VAEGAAAVVV (137 aa).

This sequence belongs to the Mg-chelatase subunits D/I family.

This is an uncharacterized protein from Mycobacterium tuberculosis (strain ATCC 25618 / H37Rv).